The following is a 210-amino-acid chain: Ribonuclease HII (210 aa).

Residues 2–203 (SGVMGIDEAG…YKRVESEVKQ (202 aa)) form the RNase H type-2 domain. Residues aspartate 8, glutamate 9, and aspartate 99 each contribute to the a divalent metal cation site.

Belongs to the RNase HII family. Requires Mn(2+) as cofactor. The cofactor is Mg(2+).

It is found in the cytoplasm. It catalyses the reaction Endonucleolytic cleavage to 5'-phosphomonoester.. Endonuclease that specifically degrades the RNA of RNA-DNA hybrids. The sequence is that of Ribonuclease HII from Methanopyrus kandleri (strain AV19 / DSM 6324 / JCM 9639 / NBRC 100938).